A 231-amino-acid polypeptide reads, in one-letter code: Ribosomal RNA small subunit methyltransferase G (231 aa).

S-adenosyl-L-methionine contacts are provided by residues G75, F80, 126–127 (AE), and R142.

This sequence belongs to the methyltransferase superfamily. RNA methyltransferase RsmG family.

It localises to the cytoplasm. Functionally, specifically methylates the N7 position of a guanine in 16S rRNA. This chain is Ribosomal RNA small subunit methyltransferase G, found in Mycoplasma capricolum subsp. capricolum (strain California kid / ATCC 27343 / NCTC 10154).